The following is a 489-amino-acid chain: Rhamnulokinase (489 aa).

13-17 (ASSGR) is a binding site for ATP. A disulfide bond links C68 and C222. Substrate is bound by residues G83 and 236–238 (HDT). The active-site Proton acceptor is D237. ATP is bound at residue T259. A substrate-binding site is contributed by N296. Residue Q304 participates in ATP binding. Residues C353 and C370 are joined by a disulfide bond. G402 is an ATP binding site. A disulfide bridge links C413 with C417.

This sequence belongs to the rhamnulokinase family. As to quaternary structure, monomer. Requires Mg(2+) as cofactor.

The catalysed reaction is L-rhamnulose + ATP = L-rhamnulose 1-phosphate + ADP + H(+). It participates in carbohydrate degradation; L-rhamnose degradation; glycerone phosphate from L-rhamnose: step 2/3. Functionally, involved in the catabolism of L-rhamnose (6-deoxy-L-mannose). Catalyzes the transfer of the gamma-phosphate group from ATP to the 1-hydroxyl group of L-rhamnulose to yield L-rhamnulose 1-phosphate. This chain is Rhamnulokinase, found in Escherichia coli O17:K52:H18 (strain UMN026 / ExPEC).